The chain runs to 346 residues: Tetraacyldisaccharide 4'-kinase (346 aa).

54–61 (TVGGAGKT) is an ATP binding site.

The protein belongs to the LpxK family.

It catalyses the reaction a lipid A disaccharide + ATP = a lipid IVA + ADP + H(+). Its pathway is glycolipid biosynthesis; lipid IV(A) biosynthesis; lipid IV(A) from (3R)-3-hydroxytetradecanoyl-[acyl-carrier-protein] and UDP-N-acetyl-alpha-D-glucosamine: step 6/6. In terms of biological role, transfers the gamma-phosphate of ATP to the 4'-position of a tetraacyldisaccharide 1-phosphate intermediate (termed DS-1-P) to form tetraacyldisaccharide 1,4'-bis-phosphate (lipid IVA). The sequence is that of Tetraacyldisaccharide 4'-kinase from Sinorhizobium fredii (strain NBRC 101917 / NGR234).